Here is a 99-residue protein sequence, read N- to C-terminus: Small integral membrane protein 14 (99 aa).

Residues Met-1–Asn-49 lie on the Lumenal side of the membrane. The chain crosses the membrane as a helical span at residues Gly-50–Leu-70. Residues Arg-71–Asp-99 lie on the Cytoplasmic side of the membrane. The interval Ser-78–Asp-99 is disordered.

It is found in the endoplasmic reticulum membrane. The protein is Small integral membrane protein 14 (SMIM14) of Bos taurus (Bovine).